The sequence spans 240 residues: Ribonuclease 3 (240 aa).

One can recognise an RNase III domain in the interval 9–141 (VEELQKRLGV…LLAALYLDQG (133 aa)). Glutamate 54 contacts Mg(2+). Residue aspartate 58 is part of the active site. The Mg(2+) site is built by aspartate 127 and glutamate 130. Residue glutamate 130 is part of the active site. A DRBM domain is found at 168–237 (DYKTALQEIV…ARKAYEKLVA (70 aa)).

This sequence belongs to the ribonuclease III family. Homodimer. Requires Mg(2+) as cofactor.

Its subcellular location is the cytoplasm. The catalysed reaction is Endonucleolytic cleavage to 5'-phosphomonoester.. In terms of biological role, digests double-stranded RNA. Involved in the processing of primary rRNA transcript to yield the immediate precursors to the large and small rRNAs (23S and 16S). Processes some mRNAs, and tRNAs when they are encoded in the rRNA operon. Processes pre-crRNA and tracrRNA of type II CRISPR loci if present in the organism. In Thermotoga neapolitana (strain ATCC 49049 / DSM 4359 / NBRC 107923 / NS-E), this protein is Ribonuclease 3.